The following is a 542-amino-acid chain: Chitinase 2 (542 aa).

The signal sequence occupies residues 1 to 22; it reads MLTRTFLGMAISAFLASTGVQA. The GH18 domain occupies 29–314; it reads PNVMYYWGQN…SQLYSLVHSG (286 aa). Glutamate 166 functions as the Proton donor in the catalytic mechanism. A disordered region spans residues 312 to 356; that stretch reads HSGGSTPPPPSSSSATKTTTKTTATSTKTTTTTAPTATSTPGSCP. Positions 323-354 are enriched in low complexity; that stretch reads SSSATKTTTKTTATSTKTTTTTAPTATSTPGS. The chitin-binding, high affinity stretch occupies residues 355–406; the sequence is CPVANQPCSTQNQYACTADGKYAVCDHGKWVASSCPSNTVCIPTTDGASIYC. The propeptide occupies 447 to 542; that stretch reads AQLAVTSTDK…APSTSAWNFK (96 aa).

It belongs to the glycosyl hydrolase 18 family. Chitinase class III subfamily. Monomer. Post-translationally, O-glycosylated.

It is found in the secreted. The catalysed reaction is Random endo-hydrolysis of N-acetyl-beta-D-glucosaminide (1-&gt;4)-beta-linkages in chitin and chitodextrins.. Functionally, probably involved in the apical growth and branching of fungal hyphae. The protein is Chitinase 2 (CHI2) of Rhizopus oligosporus (Rhizopus microsporus var. oligosporus).